We begin with the raw amino-acid sequence, 238 residues long: Probable transcriptional regulatory protein SMU_1789c (238 aa).

It belongs to the TACO1 family. YeeN subfamily.

It is found in the cytoplasm. This is Probable transcriptional regulatory protein SMU_1789c from Streptococcus mutans serotype c (strain ATCC 700610 / UA159).